A 175-amino-acid chain; its full sequence is Riboflavin kinase (175 aa).

CDP is bound at residue 54–59 (GLGEGK). The Mg(2+) site is built by threonine 83 and asparagine 85. FMN-binding residues include threonine 142 and glutamate 150. 155–158 (FHLR) lines the CDP pocket.

Belongs to the archaeal riboflavin kinase family. It depends on Mg(2+) as a cofactor.

It catalyses the reaction riboflavin + CTP = CDP + FMN + H(+). It functions in the pathway cofactor biosynthesis; FMN biosynthesis; FMN from riboflavin (CTP route): step 1/1. Functionally, catalyzes the CTP-dependent phosphorylation of riboflavin (vitamin B2) to form flavin mononucleotide (FMN). The protein is Riboflavin kinase of Saccharolobus solfataricus (strain ATCC 35092 / DSM 1617 / JCM 11322 / P2) (Sulfolobus solfataricus).